We begin with the raw amino-acid sequence, 668 residues long: Ecdysone oxidase (668 aa).

FAD-binding positions include 137-140, Val-270, and 536-537; these read NHMV and WH. The active-site Proton acceptor is His-537.

This sequence belongs to the GMC oxidoreductase family. Requires FAD as cofactor.

It carries out the reaction ecdysone + O2 = 3-dehydroecdysone + H2O2. Involved in the inactivation of ecdysteroid molting hormones by converting ecdysteroids into 3-dehydroecdysteroids. In Bombyx mori (Silk moth), this protein is Ecdysone oxidase.